A 215-amino-acid chain; its full sequence is Octanoyltransferase (215 aa).

Residues 31-206 (PDSQDEIWLV…QLVKHLDYAE (176 aa)) enclose the BPL/LPL catalytic domain. Substrate-binding positions include 70–77 (RGGQVTYH), 137–139 (SLG), and 150–152 (GLA). Cys168 serves as the catalytic Acyl-thioester intermediate.

This sequence belongs to the LipB family.

It is found in the cytoplasm. It carries out the reaction octanoyl-[ACP] + L-lysyl-[protein] = N(6)-octanoyl-L-lysyl-[protein] + holo-[ACP] + H(+). Its pathway is protein modification; protein lipoylation via endogenous pathway; protein N(6)-(lipoyl)lysine from octanoyl-[acyl-carrier-protein]: step 1/2. Its function is as follows. Catalyzes the transfer of endogenously produced octanoic acid from octanoyl-acyl-carrier-protein onto the lipoyl domains of lipoate-dependent enzymes. Lipoyl-ACP can also act as a substrate although octanoyl-ACP is likely to be the physiological substrate. The chain is Octanoyltransferase from Pseudomonas putida (strain ATCC 700007 / DSM 6899 / JCM 31910 / BCRC 17059 / LMG 24140 / F1).